A 252-amino-acid polypeptide reads, in one-letter code: Hydroxyacylglutathione hydrolase (252 aa).

The Zn(2+) site is built by His54, His56, Asp58, His59, His111, Asp130, and His170.

The protein belongs to the metallo-beta-lactamase superfamily. Glyoxalase II family. As to quaternary structure, monomer. Zn(2+) serves as cofactor.

It carries out the reaction an S-(2-hydroxyacyl)glutathione + H2O = a 2-hydroxy carboxylate + glutathione + H(+). It participates in secondary metabolite metabolism; methylglyoxal degradation; (R)-lactate from methylglyoxal: step 2/2. Thiolesterase that catalyzes the hydrolysis of S-D-lactoyl-glutathione to form glutathione and D-lactic acid. In Francisella tularensis subsp. holarctica (strain FTNF002-00 / FTA), this protein is Hydroxyacylglutathione hydrolase.